A 455-amino-acid polypeptide reads, in one-letter code: Bifunctional protein GlmU (455 aa).

Residues 1-226 (MSLDIVILAA…AMEVQGANDR (226 aa)) form a pyrophosphorylase region. Residues 8–11 (LAAG), K22, Q73, 78–79 (GT), 99–101 (YGD), G136, E151, N166, and N224 each bind UDP-N-acetyl-alpha-D-glucosamine. D101 is a Mg(2+) binding site. Position 224 (N224) interacts with Mg(2+). The interval 227–247 (KQLSELERHYQLREARRLMAA) is linker. Residues 248–455 (GVTLRDPSRF…WKRPVKITKD (208 aa)) form an N-acetyltransferase region. UDP-N-acetyl-alpha-D-glucosamine contacts are provided by R330 and K348. H360 acts as the Proton acceptor in catalysis. Y363 and N374 together coordinate UDP-N-acetyl-alpha-D-glucosamine. Acetyl-CoA is bound by residues A377, 383 to 384 (NY), S402, A420, and R437.

It in the N-terminal section; belongs to the N-acetylglucosamine-1-phosphate uridyltransferase family. The protein in the C-terminal section; belongs to the transferase hexapeptide repeat family. Homotrimer. Mg(2+) serves as cofactor.

It localises to the cytoplasm. The catalysed reaction is alpha-D-glucosamine 1-phosphate + acetyl-CoA = N-acetyl-alpha-D-glucosamine 1-phosphate + CoA + H(+). It catalyses the reaction N-acetyl-alpha-D-glucosamine 1-phosphate + UTP + H(+) = UDP-N-acetyl-alpha-D-glucosamine + diphosphate. The protein operates within nucleotide-sugar biosynthesis; UDP-N-acetyl-alpha-D-glucosamine biosynthesis; N-acetyl-alpha-D-glucosamine 1-phosphate from alpha-D-glucosamine 6-phosphate (route II): step 2/2. It participates in nucleotide-sugar biosynthesis; UDP-N-acetyl-alpha-D-glucosamine biosynthesis; UDP-N-acetyl-alpha-D-glucosamine from N-acetyl-alpha-D-glucosamine 1-phosphate: step 1/1. It functions in the pathway bacterial outer membrane biogenesis; LPS lipid A biosynthesis. Functionally, catalyzes the last two sequential reactions in the de novo biosynthetic pathway for UDP-N-acetylglucosamine (UDP-GlcNAc). The C-terminal domain catalyzes the transfer of acetyl group from acetyl coenzyme A to glucosamine-1-phosphate (GlcN-1-P) to produce N-acetylglucosamine-1-phosphate (GlcNAc-1-P), which is converted into UDP-GlcNAc by the transfer of uridine 5-monophosphate (from uridine 5-triphosphate), a reaction catalyzed by the N-terminal domain. This Pseudomonas syringae pv. tomato (strain ATCC BAA-871 / DC3000) protein is Bifunctional protein GlmU.